The following is a 189-amino-acid chain: Probable nicotinate-nucleotide adenylyltransferase (189 aa).

It belongs to the NadD family.

The enzyme catalyses nicotinate beta-D-ribonucleotide + ATP + H(+) = deamido-NAD(+) + diphosphate. It participates in cofactor biosynthesis; NAD(+) biosynthesis; deamido-NAD(+) from nicotinate D-ribonucleotide: step 1/1. Functionally, catalyzes the reversible adenylation of nicotinate mononucleotide (NaMN) to nicotinic acid adenine dinucleotide (NaAD). The sequence is that of Probable nicotinate-nucleotide adenylyltransferase from Bacillus cereus (strain Q1).